Here is a 618-residue protein sequence, read N- to C-terminus: UvrABC system protein C (618 aa).

Residues 20 to 98 (TAPGVYRMYA…IKSLSPRYNV (79 aa)) enclose the GIY-YIG domain. The 36-residue stretch at 207–242 (DQLGEEIMHSMQQASEALEFERAARLRDLLSSLRSM) folds into the UVR domain.

The protein belongs to the UvrC family. As to quaternary structure, interacts with UvrB in an incision complex.

It localises to the cytoplasm. The UvrABC repair system catalyzes the recognition and processing of DNA lesions. UvrC both incises the 5' and 3' sides of the lesion. The N-terminal half is responsible for the 3' incision and the C-terminal half is responsible for the 5' incision. The polypeptide is UvrABC system protein C (Xanthomonas campestris pv. campestris (strain 8004)).